Here is an 883-residue protein sequence, read N- to C-terminus: Collagen, type I, alpha 1b (883 aa).

The segment at 1 to 883 (QMSYVDHSKS…LGGSNDVELR (883 aa)) is disordered. Over residues 13 to 33 (PPQPGPMGPMGPRGPPGPPGS) the composition is skewed to pro residues. 3 stretches are compositionally biased toward low complexity: residues 34-57 (SGPQ…AMGS), 113-122 (VPGVMGARGR), and 129-140 (SGARGNDGNTGP). Composition is skewed to gly residues over residues 147-161 (TGGE…GNEG) and 185-194 (GTDGGPGAKG). 3 stretches are compositionally biased toward low complexity: residues 195–205 (SPGAAGLAGAP), 214–223 (AQGAVGAPGP), and 230–248 (PGAS…PGPA). The span at 285–297 (GADGGAGGKGAPG) shows a compositional bias: gly residues. Composition is skewed to low complexity over residues 310 to 326 (ATGE…PGSK) and 390 to 402 (VGAP…AGPA). Positions 415-424 (GAPGLGGPTG) are enriched in gly residues. Residues 425-444 (ARGAPGPAGNDGAKGEPGAA) show a composition bias toward low complexity. Gly residues-rich tracts occupy residues 445–454 (GAPGGLGAPG) and 478–487 (GGKGGDGAPG). Positions 512-542 (AGPTGPRGETGPPGPAGFAGPPGADGQPGAK) are enriched in low complexity. The span at 564-573 (GPKGGAGPPG) shows a compositional bias: gly residues. Low complexity-rich tracts occupy residues 574-584 (ATGFPGPAGRV), 717-726 (APGAVGPSGK), and 742-756 (SGPA…PAGA). The segment covering 757–771 (KGDRGEAGEAGDRGH) has biased composition (basic and acidic residues). Residues 792–812 (PAGASGPAGPRGPAGSNGAPG) are compositionally biased toward low complexity. Over residues 821 to 836 (AGPPGPPGPAGPPGPP) the composition is skewed to pro residues.

Belongs to the fibrillar collagen family.

The protein is Collagen, type I, alpha 1b of Epinephelus costae (Goldblotch grouper).